The following is a 915-amino-acid chain: p53-induced death domain-containing protein 1 (915 aa).

A2 carries the post-translational modification N-acetylalanine. LRR repeat units follow at residues 131 to 152 (CLAH…VPEL), 154 to 176 (GLDA…GALP), 177 to 199 (ALTF…GSLS), 200 to 221 (TLQR…IGNL), 223 to 245 (SLSE…AGLR), 246 to 268 (SLRL…VHLP), and 269 to 290 (LITR…LLDA). S304 bears the Phosphoserine mark. 2 ZU5 domains span residues 327–459 (DLDS…VLRP) and 460–601 (VSNT…WYTT). Peptidase S68 stretches follow at residues 428-457 (DLET…LVVL) and 571-599 (DITT…WLWY). Active-site residues include H449, S451, H591, and S593. Residues 585–721 (ARFQVTHFSW…TTALDREAQD (137 aa)) form a UPA domain region. The region spanning 793 to 878 (TQSNLLSVAS…DVAEEVRAIL (86 aa)) is the Death domain. The segment at 888–915 (SIRRTGLAPEDSTLPGTSASQTPESAQA) is disordered. Residues 901–915 (LPGTSASQTPESAQA) are compositionally biased toward polar residues.

Forms a complex named the PIDDosome with CASP2 and CRADD. Forms a complex with IKBKG and RIPK1. Interacts with FADD and MADD. In terms of processing, undergoes autoproteolytic processing whose extent either directs cells towards survival or apoptotic pathways. Autoproteolytically cleaved into two main fragments PIDD-N and PIDD-C. PIDD-C can be further processed into PIDD-CC, a processing which is enhanced by DNA damage. The cleavage producing PIDD-C is required for translocation of PIDD1 to the nucleus upon DNA damage and activation of NF-kappa-B. PIDD-CC mediates the interaction with CRADD and the cleavage producing PIDD-CC is required for the activation of CASP2. PIDD-N remains associated with PIDD-C and PIDD-CC after cleavage. As to expression, ubiquitous.

The protein localises to the cytoplasm. The protein resides in the nucleus. Its function is as follows. Component of the DNA damage/stress response pathway that functions downstream of p53/TP53 and can either promote cell survival or apoptosis. Associated with CRADD and the CASP2 caspase, it forms the PIDDosome a complex that activates CASP2 and triggers apoptosis. Associated with IKBKG and RIPK1, it enhances sumoylation and ubiquitination of IKBKG which is important for activation of the transcription factor NF-kappa-B. In Mus musculus (Mouse), this protein is p53-induced death domain-containing protein 1.